The primary structure comprises 95 residues: Pyrimidine/purine nucleoside phosphorylase (95 aa).

This sequence belongs to the nucleoside phosphorylase PpnP family.

It carries out the reaction a purine D-ribonucleoside + phosphate = a purine nucleobase + alpha-D-ribose 1-phosphate. The catalysed reaction is adenosine + phosphate = alpha-D-ribose 1-phosphate + adenine. The enzyme catalyses cytidine + phosphate = cytosine + alpha-D-ribose 1-phosphate. It catalyses the reaction guanosine + phosphate = alpha-D-ribose 1-phosphate + guanine. It carries out the reaction inosine + phosphate = alpha-D-ribose 1-phosphate + hypoxanthine. The catalysed reaction is thymidine + phosphate = 2-deoxy-alpha-D-ribose 1-phosphate + thymine. The enzyme catalyses uridine + phosphate = alpha-D-ribose 1-phosphate + uracil. It catalyses the reaction xanthosine + phosphate = alpha-D-ribose 1-phosphate + xanthine. Catalyzes the phosphorolysis of diverse nucleosides, yielding D-ribose 1-phosphate and the respective free bases. Can use uridine, adenosine, guanosine, cytidine, thymidine, inosine and xanthosine as substrates. Also catalyzes the reverse reactions. The chain is Pyrimidine/purine nucleoside phosphorylase from Enterobacter sp. (strain 638).